Here is a 263-residue protein sequence, read N- to C-terminus: uncharacterized protein (263 aa).

Residues 183–263 are disordered; it reads APHDRPEGVP…PPSTNTKGAA (81 aa). 2 stretches are compositionally biased toward polar residues: residues 230-239 and 253-263; these read SRPTAPSRPS and TPPSTNTKGAA.

In terms of biological role, probably does not play a direct role in plasmid integration or excision. This is an uncharacterized protein from Saccharopolyspora erythraea (Streptomyces erythraeus).